A 154-amino-acid chain; its full sequence is Protein ripply (154 aa).

Residues 38–41 (WRPW) carry the WRPW motif motif. 2 disordered regions span residues 54–86 (IRERRSKPYARPSSTSNGSTRGPEPGPTSFQHP) and 121–154 (EDPAQSDDSDFESDYEDDSDTDYKPLKRNAPILN). Residues 85–119 (HPVKLHWSKPVYDYMYQYGKQLLDAFPVQATICIV) form a ripply homology domain region. Over residues 121 to 140 (EDPAQSDDSDFESDYEDDSD) the composition is skewed to acidic residues.

It belongs to the ripply family. As to expression, in the late gastrula stage, expression appears in the dorsal presomitic mesoderm and in the first three pairs of nascent somites. Expressed strongly in forming somites and then expression is rapidly down-regulated except in the first somite pair where expression is maintained for a longer period. Also expressed in the presumptive notochord and in the tail bud at the 48 hour larval stage. Expression disappears by the 72 hour stage.

Its subcellular location is the nucleus. May play a role in somitogenesis. This chain is Protein ripply, found in Branchiostoma belcheri (Amphioxus).